The primary structure comprises 602 residues: Elongation factor 4 (602 aa).

Positions 7-189 constitute a tr-type G domain; sequence KFIRNFSIIA…QLVVAIPPPV (183 aa). Residues 19 to 24 and 136 to 139 contribute to the GTP site; these read DHGKST and NKID.

Belongs to the TRAFAC class translation factor GTPase superfamily. Classic translation factor GTPase family. LepA subfamily.

The protein localises to the cell inner membrane. The enzyme catalyses GTP + H2O = GDP + phosphate + H(+). Functionally, required for accurate and efficient protein synthesis under certain stress conditions. May act as a fidelity factor of the translation reaction, by catalyzing a one-codon backward translocation of tRNAs on improperly translocated ribosomes. Back-translocation proceeds from a post-translocation (POST) complex to a pre-translocation (PRE) complex, thus giving elongation factor G a second chance to translocate the tRNAs correctly. Binds to ribosomes in a GTP-dependent manner. This Coxiella burnetii (strain RSA 493 / Nine Mile phase I) protein is Elongation factor 4.